The following is a 591-amino-acid chain: DEAD-box ATP-dependent RNA helicase 35 (591 aa).

The Q motif signature appears at 146-174; it reads KNFKDMKFPRPVLDTLKEKGIVQPTPIQV. A Helicase ATP-binding domain is found at 177 to 361; the sequence is LPVILAGRDM…RSALVKPVTV (185 aa). An ATP-binding site is contributed by 190-197; that stretch reads AFTGSGKT. The short motif at 309-312 is the DEAD box element; that stretch reads DEAD. The region spanning 372–532 is the Helicase C-terminal domain; that stretch reads DVIQEVEYVK…RIPPVLAELN (161 aa). The segment at 548-565 adopts a CCHC-type zinc-finger fold; sequence KGCAYCGGLGHRIRDCPK.

It belongs to the DEAD box helicase family. DDX41 subfamily.

It catalyses the reaction ATP + H2O = ADP + phosphate + H(+). The polypeptide is DEAD-box ATP-dependent RNA helicase 35 (RH35) (Arabidopsis thaliana (Mouse-ear cress)).